Reading from the N-terminus, the 347-residue chain is Isocitrate dehydrogenase [NAD] subunit alpha, mitochondrial (347 aa).

The transit peptide at 1–8 directs the protein to the mitochondrion; the sequence is QKQVTRGF. 14-42 provides a ligand contact to NAD(+); sequence TVTLIPGDGIGPEISAAVMKIFDAAKAPI. The residue at position 58 (lysine 58) is an N6-succinyllysine. Threonine 82 carries the post-translational modification Phosphothreonine. 3 residues coordinate substrate: arginine 96, arginine 106, and arginine 127. N6-acetyllysine is present on lysine 204. Mg(2+) is bound by residues aspartate 214, aspartate 238, and aspartate 242. Lysine 324 carries the N6-acetyllysine; alternate modification. N6-succinyllysine; alternate is present on lysine 324. N6-succinyllysine is present on lysine 331.

Belongs to the isocitrate and isopropylmalate dehydrogenases family. Heterooligomer of subunits alpha (IDH3A), beta (IDH3B), and gamma (IDH3G) in the apparent ratio of 2:1:1. The heterodimer containing one IDH3A and one IDH3B subunit and the heterodimer containing one IDH3A and one IDH3G subunit assemble into a heterotetramer (which contains two subunits of IDH3A, one of IDH3B and one of IDH3G) and further into the heterooctamer. Mg(2+) serves as cofactor. It depends on Mn(2+) as a cofactor.

The protein resides in the mitochondrion. It carries out the reaction D-threo-isocitrate + NAD(+) = 2-oxoglutarate + CO2 + NADH. Its activity is regulated as follows. The heterotetramer and the heterodimer composed of IDH3A and IDH3G subunits can be allosterically activated by citrate (CIT) or/and ADP, and the two activators can act independently or synergistically. The heterodimer composed of IDH3A and IDH3B subunits cannot be allosterically regulated and the allosteric regulation of the heterotetramer is through the IDH3G subunit and not the IDH3B subunit. The IDH3G subunit contains the allosteric site which consists of a CIT-binding site and an ADP-binding site, and the binding of CIT and ADP causes conformational changes at the allosteric site which are transmitted to the active site in the catalytic subunit (IDH3A) through a cascade of conformational changes at the heterodimer interface, leading to stabilization of the isocitrate-binding at the active site and thus activation of the enzyme. ATP can activate the heterotetramer and the heterodimer composed of IDH3A and IDH3G subunits at low concentrations but inhibits their activities at high concentrations, whereas ATP exhibits only inhibitory effect on the heterodimer composed of IDH3A and IDH3B subunits. In terms of biological role, catalytic subunit of the enzyme which catalyzes the decarboxylation of isocitrate (ICT) into alpha-ketoglutarate. The heterodimer composed of the alpha (IDH3A) and beta (IDH3B) subunits and the heterodimer composed of the alpha (IDH3A) and gamma (IDH3G) subunits, have considerable basal activity but the full activity of the heterotetramer (containing two subunits of IDH3A, one of IDH3B and one of IDH3G) requires the assembly and cooperative function of both heterodimers. This is Isocitrate dehydrogenase [NAD] subunit alpha, mitochondrial (IDH3A) from Macaca fascicularis (Crab-eating macaque).